A 402-amino-acid chain; its full sequence is Protein lag-2 (402 aa).

An N-terminal signal peptide occupies residues 1 to 15; that stretch reads MIAYFLLLLTCLPVL. Residues 16-279 are Extracellular-facing; sequence QARVEVHQEF…TTTTPTTVEI (264 aa). Residues N72 and N105 are each glycosylated (N-linked (GlcNAc...) asparagine). The region spanning 122-166 is the DSL domain; it reads VTCARNYFGNRCENFCDAHLAKAARKRCDAMGRLRCDIGWMGPHC. Cystine bridges form between C124–C133, C137–C149, C157–C166, C175–C183, C177–C204, C206–C215, C233–C245, C239–C254, and C256–C265. EGF-like domains are found at residues 171–216 and 229–266; these read DPRK…TRCE and RPDACSVKDACLNGAKCFPNGPKVFCSCAVGFIGEFCE. A glycan (N-linked (GlcNAc...) asparagine) is linked at N194. Residues 280-306 form a helical membrane-spanning segment; sequence TVSTSGYSSAVYITVALFVIFSIIIGC. Topologically, residues 307-402 are cytoplasmic; that stretch reads FKYKFKPMRQ…PPSIPACHYV (96 aa).

In terms of assembly, may interact with lin-12 / Notch receptor. In terms of tissue distribution, expressed in the gonad distal tip cell (DTC) of hermaphrodites.

It localises to the cell membrane. Probable ligand for lin-12/Notch and glp-1/Notch receptors and involved in the mediation of Notch signaling. Involved in the lin-12/Notch pathway signaling of cell fate in vulval precursor cells (VPCs) and in the postembryonic mesodermal lineage (M lineage), acting redundantly with dsl-1 and apx-1. Functions in uterine cells to promote basement membrane mobility during tissue remodeling. Required for oocyte growth control, acting redundantly with apx-1, perhaps signaling via the glp-1/Notch pathway. Plays a role in Notch-dependent induction of left-right asymmetry in interneurons and motoneurons. Involved in maintaining the developmentally arrested larval state known as dauer, probably signaling in the glp-1/Notch pathway. Required for normal sleep bout quantity and arousal thresholds during the transition from the last larval stage to adulthood in well-fed animals. In Caenorhabditis elegans, this protein is Protein lag-2.